The primary structure comprises 284 residues: Deoxyribonuclease-1 (284 aa).

Positions 1–22 (MRYTGLMGILLTLVNLLQLAAT) are cleaved as a signal peptide. An N-linked (GlcNAc...) asparagine glycan is attached at Asn-40. Residue Glu-100 is part of the active site. Cys-123 and Cys-126 are oxidised to a cystine. N-linked (GlcNAc...) asparagine glycosylation is present at Asn-128. The active site involves His-156. A disulfide bond links Cys-195 and Cys-231.

The protein belongs to the DNase I family. Ca(2+) serves as cofactor. The cofactor is Mg(2+).

It is found in the secreted. Its subcellular location is the zymogen granule. It localises to the nucleus envelope. The enzyme catalyses Endonucleolytic cleavage to 5'-phosphodinucleotide and 5'-phosphooligonucleotide end-products.. In terms of biological role, serum endocuclease secreted into body fluids by a wide variety of exocrine and endocrine organs. Expressed by non-hematopoietic tissues and preferentially cleaves protein-free DNA. Among other functions, seems to be involved in cell death by apoptosis. Binds specifically to G-actin and blocks actin polymerization. Together with DNASE1L3, plays a key role in degrading neutrophil extracellular traps (NETs). NETs are mainly composed of DNA fibers and are released by neutrophils to bind pathogens during inflammation. Degradation of intravascular NETs by DNASE1 and DNASE1L3 is required to prevent formation of clots that obstruct blood vessels and cause organ damage following inflammation. In Rattus norvegicus (Rat), this protein is Deoxyribonuclease-1 (Dnase1).